The sequence spans 309 residues: Dehydrogenase/reductase SDR family member 7B (309 aa).

At 1-4 (MDLT) the chain is on the cytoplasmic side. A helical; Signal-anchor for type II membrane protein membrane pass occupies residues 5 to 25 (TWAIFPLLLGSIGVYSLYKLL). Over 26–272 (QRLRSGAYLQ…AVGERRKELL (247 aa)) the chain is Lumenal. Residues Ser-46 and Leu-48 each contribute to the NAD(+) site. Position 178 (Ser-178) interacts with substrate. NAD(+) contacts are provided by Tyr-191, Lys-195, and Thr-226. The active-site Proton acceptor is the Tyr-191.

The protein belongs to the short-chain dehydrogenases/reductases (SDR) family.

It localises to the endoplasmic reticulum membrane. Putative oxidoreductase. The protein is Dehydrogenase/reductase SDR family member 7B (dhrs7b) of Xenopus tropicalis (Western clawed frog).